Here is a 118-residue protein sequence, read N- to C-terminus: DNA mimic protein DMP12 (118 aa).

Belongs to the DMP12-like protein family. As to quaternary structure, monomer. Interacts with the dimeric form of the DNA-binding protein HU.

In terms of biological role, acts as a DNA mimic. Interacts with the DNA-binding protein HU and partially prevents the binding of HU protein to DNA by occupying the DNA binding sites on the protein. However, the relatively weak affinity of DMP12 for HU suggests that it may not completely block the HU protein-DNA binding, and that DMP12 is more likely to act as a regulator than a competitive inhibitor. It protects HU protein from limited digestion by trypsin in a limited trypsin digestion assay, suggesting that it may serve to protect the HU protein and improve the stability of unbound HU protein. This is DNA mimic protein DMP12 from Neisseria meningitidis serogroup B (strain ATCC BAA-335 / MC58).